A 566-amino-acid chain; its full sequence is Protein kintoun (566 aa).

Disordered regions lie at residues 183–298, 399–467, and 493–552; these read KYKG…TAPQ, EEEE…AETG, and QLEE…ESRI. Positions 208 to 290 are enriched in low complexity; it reads PQQTTGPQQP…HQPTDPQQTT (83 aa). Basic and acidic residues predominate over residues 399-424; the sequence is EEEERRAEEEESRKGGDEDGELHPDC. Low complexity predominate over residues 440–467; the sequence is TPAADTHTPAADTHTPAADTHTPAAETG. Positions 535–550 are enriched in basic and acidic residues; it reads DPAHTDPAHTDPEMES.

This sequence belongs to the PIH1 family. Kintoun subfamily.

It is found in the cytoplasm. The protein resides in the dynein axonemal particle. Required for cytoplasmic pre-assembly of axonemal dyneins, thereby playing a central role in motility in cilia and flagella. Involved in pre-assembly of dynein arm complexes in the cytoplasm before intraflagellar transport loads them for the ciliary compartment. This Danio rerio (Zebrafish) protein is Protein kintoun.